Reading from the N-terminus, the 397-residue chain is Ribosomal RNA large subunit methyltransferase I (397 aa).

The PUA domain occupies 2–80 (AIRIKLKPGR…KEEAIDADFF (79 aa)).

It belongs to the methyltransferase superfamily. RlmI family.

It is found in the cytoplasm. The catalysed reaction is cytidine(1962) in 23S rRNA + S-adenosyl-L-methionine = 5-methylcytidine(1962) in 23S rRNA + S-adenosyl-L-homocysteine + H(+). Its function is as follows. Specifically methylates the cytosine at position 1962 (m5C1962) of 23S rRNA. The protein is Ribosomal RNA large subunit methyltransferase I of Shewanella denitrificans (strain OS217 / ATCC BAA-1090 / DSM 15013).